Consider the following 802-residue polypeptide: Xylanase/beta-glucanase (802 aa).

Residues 1–31 (MKKSIFKRYAAAVGLMASVLMFTAVPTTSNA) form the signal peptide. Residues 32–239 (ADDQKTGKVG…SNGSANVKSI (208 aa)) enclose the GH11 domain. E124 functions as the Nucleophile in the catalytic mechanism. The Proton donor role is filled by E226. The b stretch occupies residues 245–523 (IDIPDPEPIK…SYLEGHDPSK (279 aa)). In terms of domain architecture, CBM-cenC spans 258-404 (NGYYLKENFE…YMDGAYAGVK (147 aa)). Disordered stretches follow at residues 414-436 (SQSV…PSVT) and 533-564 (TTTT…YRDL). Low complexity-rich tracts occupy residues 419 to 436 (PPVT…PSVT) and 533 to 553 (TTTT…TTTT). The 80-residue stretch at 434-513 (SVTKWGDANC…LIRAISELPE (80 aa)) folds into the Dockerin domain. Residues 524 to 555 (TTTTTTRITTTTTTTTTTTTSKTTTTTTTTSP) form a linker region. The GH16 domain occupies 556–792 (AMHGGYRDLG…WVTYNKNGVQ (237 aa)). E684 functions as the Nucleophile in the catalytic mechanism.

This sequence in the N-terminal section; belongs to the glycosyl hydrolase 11 (cellulase G) family. The protein in the C-terminal section; belongs to the glycosyl hydrolase 16 family.

It catalyses the reaction Endohydrolysis of (1-&gt;4)-beta-D-xylosidic linkages in xylans.. It carries out the reaction Hydrolysis of (1-&gt;4)-beta-D-glucosidic linkages in beta-D-glucans containing (1-&gt;3)- and (1-&gt;4)-bonds.. The protein operates within glycan degradation; xylan degradation. Functionally, contains two catalytic domains with xylanase and endo-beta-1,3-1,4 glucanase activities. The chain is Xylanase/beta-glucanase (xynD) from Ruminococcus flavefaciens.